Reading from the N-terminus, the 672-residue chain is Inner kinetochore subunit mis6 (672 aa).

This sequence belongs to the CENP-I/CTF3 family. As to quaternary structure, component of the inner kinetochore constitutive centromere-associated network (CCAN) (also known as central kinetochore Sim4 complex in fission yeast), which is composed of at least cnl2, cnp3, cnp20, fta1, fta2, fta3, fta4, fta6, fta7, mal2, mhf1, mhf2, mis6, mis15, mis17, sim4 and wip1. Interacts with cnp1, sim4, mis15 and mis17.

Its subcellular location is the nucleus. It localises to the chromosome. It is found in the centromere. Component of the kinetochore, a multiprotein complex that assembles on centromeric DNA and attaches chromosomes to spindle microtubules, mediating chromosome segregation and sister chromatid segregation during meiosis and mitosis. Component of the inner kinetochore constitutive centromere-associated network (CCAN), which serves as a structural platform for outer kinetochore assembly. Required for the localization of cnp1 to the centromere. In Schizosaccharomyces pombe (strain 972 / ATCC 24843) (Fission yeast), this protein is Inner kinetochore subunit mis6 (mis6).